The following is a 154-amino-acid chain: Transcription antitermination protein NusB (154 aa).

A disordered region spans residues 132–154 (KDKQSPQSTPLDDSDKDESDQTN). The segment covering 143 to 154 (DDSDKDESDQTN) has biased composition (acidic residues).

The protein belongs to the NusB family.

Involved in transcription antitermination. Required for transcription of ribosomal RNA (rRNA) genes. Binds specifically to the boxA antiterminator sequence of the ribosomal RNA (rrn) operons. This chain is Transcription antitermination protein NusB, found in Bifidobacterium animalis subsp. lactis (strain AD011).